A 965-amino-acid polypeptide reads, in one-letter code: Kinesin-like protein KIN-7K, chloroplastic (965 aa).

The tract at residues Met1–Asn69 is disordered. The segment covering Ser19–Ser28 has biased composition (low complexity). Residues Lys29–Gly38 are compositionally biased toward polar residues. Positions Ser40–Pro56 are enriched in low complexity. The 320-residue stretch at Asn69–Ile388 folds into the Kinesin motor domain. Gly149–Thr156 is a binding site for ATP. Residues Glu389 to Lys483 are a coiled coil. Positions Leu551–Asp561 are enriched in basic residues. Disordered regions lie at residues Leu551 to Asp633 and Ala842 to Met888. A compositionally biased stretch (low complexity) spans Ser564–Ser577. The span at Ser606–Glu623 shows a compositional bias: basic and acidic residues. Coiled coils occupy residues Ser628–Thr703 and Asn738–Ser846. Over residues Arg851–Asn862 the composition is skewed to low complexity. Positions Gly864–Met888 are enriched in basic and acidic residues. A coiled-coil region spans residues Tyr896–Met931. The segment at Gln942 to Phe965 is disordered. Polar residues predominate over residues Ser949–Phe965.

It belongs to the TRAFAC class myosin-kinesin ATPase superfamily. Kinesin family. KIN-7 subfamily.

Its subcellular location is the plastid. The protein resides in the chloroplast. The sequence is that of Kinesin-like protein KIN-7K, chloroplastic from Arabidopsis thaliana (Mouse-ear cress).